Here is a 130-residue protein sequence, read N- to C-terminus: Large ribosomal subunit protein bL12 (130 aa).

The protein belongs to the bacterial ribosomal protein bL12 family. In terms of assembly, homodimer. Part of the ribosomal stalk of the 50S ribosomal subunit. Forms a multimeric L10(L12)X complex, where L10 forms an elongated spine to which 2 to 4 L12 dimers bind in a sequential fashion. Binds GTP-bound translation factors.

Forms part of the ribosomal stalk which helps the ribosome interact with GTP-bound translation factors. Is thus essential for accurate translation. In Mycobacterium bovis (strain ATCC BAA-935 / AF2122/97), this protein is Large ribosomal subunit protein bL12.